Consider the following 320-residue polypeptide: Undecaprenyl-diphosphatase (320 aa).

8 helical membrane passes run 9–29 (FVLV…LEVF), 82–102 (GVAF…WYFW), 130–150 (LGII…KKLI), 161–181 (LGAI…GEKL), 191–211 (LTMQ…IPGV), 236–256 (FLLG…DVFA), 265–285 (LPLI…IAGL), and 296–316 (VFIW…SAGI).

The protein belongs to the UppP family.

It localises to the cell inner membrane. It carries out the reaction di-trans,octa-cis-undecaprenyl diphosphate + H2O = di-trans,octa-cis-undecaprenyl phosphate + phosphate + H(+). In terms of biological role, catalyzes the dephosphorylation of undecaprenyl diphosphate (UPP). Confers resistance to bacitracin. This chain is Undecaprenyl-diphosphatase, found in Trichormus variabilis (strain ATCC 29413 / PCC 7937) (Anabaena variabilis).